A 181-amino-acid polypeptide reads, in one-letter code: Oligoribonuclease (181 aa).

Residues 8 to 171 (LIWVDLEMTG…DDIRESIAEL (164 aa)) enclose the Exonuclease domain. Tyrosine 129 is an active-site residue.

The protein belongs to the oligoribonuclease family.

The protein localises to the cytoplasm. 3'-to-5' exoribonuclease specific for small oligoribonucleotides. The polypeptide is Oligoribonuclease (Aliivibrio fischeri (strain ATCC 700601 / ES114) (Vibrio fischeri)).